The sequence spans 307 residues: Thiamine-monophosphate kinase (307 aa).

Mg(2+) contacts are provided by aspartate 26, threonine 37, threonine 38, and aspartate 39. Histidine 46 contacts substrate. Residues aspartate 68 and aspartate 117 each coordinate Mg(2+). ATP contacts are provided by residues 116–117 and arginine 140; that span reads GD. Residue aspartate 207 coordinates Mg(2+). Threonine 209 contributes to the ATP binding site. Residue aspartate 210 participates in Mg(2+) binding. Substrate-binding residues include glutamate 254 and phenylalanine 304.

This sequence belongs to the thiamine-monophosphate kinase family.

It catalyses the reaction thiamine phosphate + ATP = thiamine diphosphate + ADP. It participates in cofactor biosynthesis; thiamine diphosphate biosynthesis; thiamine diphosphate from thiamine phosphate: step 1/1. Catalyzes the ATP-dependent phosphorylation of thiamine-monophosphate (TMP) to form thiamine-pyrophosphate (TPP), the active form of vitamin B1. This Leptospira interrogans serogroup Icterohaemorrhagiae serovar Lai (strain 56601) protein is Thiamine-monophosphate kinase.